The chain runs to 207 residues: M-zodatoxin-Lt4a (207 aa).

An N-terminal signal peptide occupies residues 1 to 22 (MKFSIIALALAVAFVCVAESRS). Positions 23-43 (EEEGYDVSEEIQAEELEEAER) are excised as a propeptide. The Processing quadruplet motif 1 motif lies at 40 to 43 (EAER). Position 61 is a glutamine amide (Gln-61). An Inverted processing quadruplet motif 1 motif is present at residues 63-66 (REDS). The propeptide occupies 63–71 (REDSEEAGR). A Processing quadruplet motif 2 motif is present at residues 68–71 (EAGR). A Glutamine amide modification is found at Gln-89. The short motif at 91 to 94 (REDS) is the Inverted processing quadruplet motif 2 element. Positions 91–99 (REDSEEAGR) are excised as a propeptide. The Processing quadruplet motif 3 signature appears at 96 to 99 (EAGR). Gln-117 carries the post-translational modification Glutamine amide. Positions 119 to 122 (REDS) match the Inverted processing quadruplet motif 3 motif. Positions 119 to 127 (REDSEEAGR) are excised as a propeptide. The Processing quadruplet motif 4 signature appears at 124 to 127 (EAGR). Gln-145 carries the glutamine amide modification. The Inverted processing quadruplet motif 4 motif lies at 147–150 (REDS). A propeptide spanning residues 147–155 (REDSEEAGR) is cleaved from the precursor. A Processing quadruplet motif 5 motif is present at residues 152–155 (EAGR). Gln-173 is subject to Glutamine amide. The Inverted processing quadruplet motif 5 motif lies at 175-178 (REDT). A propeptide spanning residues 175–182 (REDTEEAR) is cleaved from the precursor. Residues 179–182 (EEAR) carry the Processing quadruplet motif 6 motif. Position 206 is a phenylalanine amide (Phe-206).

It belongs to the cationic peptide 03 (latarcin) family. 04 subfamily. Cleavage of the propeptide depends on the processing quadruplet motif (PQM) (XXXR, with at least one of X being E) and the inverted PQM (RXXX, with at least one of X being E). Expressed by the venom gland.

It localises to the secreted. Functionally, M-zodatoxin-Lt4a: Has antimicrobial activity against Gram-positive bacteria (A.globiformis VKM Ac-1112 (MIC=0.3 uM), and B.subtilis VKM B-501 (MIC=1.1 uM)), Gram-negative bacteria (E.coli DH5-alpha (MIC=4.5 uM), E.coli MH1 (MIC=3.2 uM), and P.aeruginosa PAO1 (MIC&gt;35 uM)), and yeasts (P.pastoris GS115 (MIC=36 uM), and S.cerevisiae Y190 (MIC=18 uM)). Does not have hemolytic activity against rabbit erythrocytes. Causes paralysis, but is not lethal when injected into insect (M.domestica) larvae. Shows no antimicrobial activity against Gram-positive bacterium B.subtilis B-501 or Gram-negative bacterium E.coli DH5-alpha at concentrations up to 20 uM. In terms of biological role, shows no antimicrobial activity against Gram-positive bacterium B.subtilis B-501 or Gram-negative bacterium E.coli DH5-alpha at concentrations up to 20 uM. Shows no toxicity towards insect (S.carnaria) larvae. The sequence is that of M-zodatoxin-Lt4a from Lachesana tarabaevi (Spider).